The primary structure comprises 191 residues: Gene BABR protein 1 (191 aa).

The sequence is that of Gene BABR protein 1 from Babesia bovis.